The primary structure comprises 210 residues: DNA-directed RNA polymerase subunit 5-like protein 1 (210 aa).

It belongs to the archaeal Rpo5/eukaryotic RPB5 RNA polymerase subunit family.

It is found in the nucleus. This is DNA-directed RNA polymerase subunit 5-like protein 1 (NRPB5L1) from Arabidopsis thaliana (Mouse-ear cress).